Reading from the N-terminus, the 211-residue chain is Beta-crystallin B3 (211 aa).

Positions 1–21 are disordered; it reads MTEQQSPPEQMVTGEGAGERG. The segment at 1-23 is N-terminal arm; sequence MTEQQSPPEQMVTGEGAGERGGN. Beta/gamma crystallin 'Greek key' domains are found at residues 24-63 and 64-108; these read YKIT…QVES and GPWL…RPLQ. The interval 109 to 113 is connecting peptide; the sequence is IDSPD. Beta/gamma crystallin 'Greek key' domains are found at residues 114–155 and 156–198; these read HKIH…RALN and GTWV…RRVR. The C-terminal arm stretch occupies residues 200–211; it reads QQWHQRGSFENS.

The protein belongs to the beta/gamma-crystallin family. In terms of assembly, homo/heterodimer, or complexes of higher-order. The structure of beta-crystallin oligomers seems to be stabilized through interactions between the N-terminal arms.

Crystallins are the dominant structural components of the vertebrate eye lens. In Gallus gallus (Chicken), this protein is Beta-crystallin B3 (CRYBB3).